Here is a 262-residue protein sequence, read N- to C-terminus: tRNA pseudouridine synthase A (262 aa).

Catalysis depends on Asp-54, which acts as the Nucleophile. Tyr-113 is a binding site for substrate.

It belongs to the tRNA pseudouridine synthase TruA family. As to quaternary structure, homodimer.

The catalysed reaction is uridine(38/39/40) in tRNA = pseudouridine(38/39/40) in tRNA. Its function is as follows. Formation of pseudouridine at positions 38, 39 and 40 in the anticodon stem and loop of transfer RNAs. The sequence is that of tRNA pseudouridine synthase A from Lactobacillus acidophilus (strain ATCC 700396 / NCK56 / N2 / NCFM).